The primary structure comprises 440 residues: Chromosome partition protein MukF (440 aa).

Residues 208 to 236 (LSETSGTLRELQDTLEAAGDKLQANLLRI) form a leucine-zipper region.

It belongs to the MukF family. As to quaternary structure, interacts, and probably forms a ternary complex, with MukE and MukB via its C-terminal region. The complex formation is stimulated by calcium or magnesium. It is required for an interaction between MukE and MukB.

It localises to the cytoplasm. The protein localises to the nucleoid. In terms of biological role, involved in chromosome condensation, segregation and cell cycle progression. May participate in facilitating chromosome segregation by condensation DNA from both sides of a centrally located replisome during cell division. Not required for mini-F plasmid partitioning. Probably acts via its interaction with MukB and MukE. Overexpression results in anucleate cells. It has a calcium binding activity. This is Chromosome partition protein MukF from Yersinia enterocolitica serotype O:8 / biotype 1B (strain NCTC 13174 / 8081).